The following is a 127-amino-acid chain: Large ribosomal subunit protein bL17 (127 aa).

Belongs to the bacterial ribosomal protein bL17 family. Part of the 50S ribosomal subunit. Contacts protein L32.

The protein is Large ribosomal subunit protein bL17 of Escherichia fergusonii (strain ATCC 35469 / DSM 13698 / CCUG 18766 / IAM 14443 / JCM 21226 / LMG 7866 / NBRC 102419 / NCTC 12128 / CDC 0568-73).